The primary structure comprises 186 residues: Elongation factor P (186 aa).

It belongs to the elongation factor P family.

It localises to the cytoplasm. It functions in the pathway protein biosynthesis; polypeptide chain elongation. Functionally, involved in peptide bond synthesis. Stimulates efficient translation and peptide-bond synthesis on native or reconstituted 70S ribosomes in vitro. Probably functions indirectly by altering the affinity of the ribosome for aminoacyl-tRNA, thus increasing their reactivity as acceptors for peptidyl transferase. The polypeptide is Elongation factor P (Prochlorococcus marinus (strain MIT 9301)).